We begin with the raw amino-acid sequence, 172 residues long: Antibacterial protein PR-39 (172 aa).

The first 29 residues, 1–29, serve as a signal peptide directing secretion; the sequence is METQRASLCLGRWSLWLLLLGLVVPSASA. Gln30 carries the pyrrolidone carboxylic acid modification. The propeptide occupies 30–130; sequence QALSYREAVL…DISCNEIQSV (101 aa). The disordered stretch occupies residues 61-80; that stretch reads DQPPKADEDPGTPKPVSFTV. Disulfide bonds link Cys85-Cys96 and Cys107-Cys124. The disordered stretch occupies residues 130-172; sequence VRRRPRPPYLPRPRPPPFFPPRLPPRIPPGFPPRFPPRFPGKR. Residues 136-172 are compositionally biased toward pro residues; that stretch reads PPYLPRPRPPPFFPPRLPPRIPPGFPPRFPPRFPGKR. Pro169 carries the proline amide modification.

The protein belongs to the cathelicidin family. Small intestine and bone marrow.

The protein localises to the secreted. Functionally, exerts a potent antimicrobial activity against both E.coli and B.megaterium. This Sus scrofa (Pig) protein is Antibacterial protein PR-39 (PR39).